A 286-amino-acid chain; its full sequence is Probable endonuclease 4 (286 aa).

Zn(2+) contacts are provided by histidine 71, histidine 111, glutamate 147, aspartate 181, histidine 184, histidine 218, aspartate 231, histidine 233, and glutamate 263.

Belongs to the AP endonuclease 2 family. Zn(2+) serves as cofactor.

It catalyses the reaction Endonucleolytic cleavage to 5'-phosphooligonucleotide end-products.. Its function is as follows. Endonuclease IV plays a role in DNA repair. It cleaves phosphodiester bonds at apurinic or apyrimidinic (AP) sites, generating a 3'-hydroxyl group and a 5'-terminal sugar phosphate. The protein is Probable endonuclease 4 of Vibrio cholerae serotype O1 (strain ATCC 39541 / Classical Ogawa 395 / O395).